Consider the following 215-residue polypeptide: Probable transaldolase (215 aa).

Catalysis depends on lysine 83, which acts as the Schiff-base intermediate with substrate.

This sequence belongs to the transaldolase family. Type 3B subfamily.

The protein resides in the cytoplasm. The enzyme catalyses D-sedoheptulose 7-phosphate + D-glyceraldehyde 3-phosphate = D-erythrose 4-phosphate + beta-D-fructose 6-phosphate. Its pathway is carbohydrate degradation; pentose phosphate pathway; D-glyceraldehyde 3-phosphate and beta-D-fructose 6-phosphate from D-ribose 5-phosphate and D-xylulose 5-phosphate (non-oxidative stage): step 2/3. Its function is as follows. Transaldolase is important for the balance of metabolites in the pentose-phosphate pathway. The sequence is that of Probable transaldolase from Clostridium perfringens (strain ATCC 13124 / DSM 756 / JCM 1290 / NCIMB 6125 / NCTC 8237 / Type A).